The following is a 100-amino-acid chain: Aspartyl/glutamyl-tRNA(Asn/Gln) amidotransferase subunit C (100 aa).

The protein belongs to the GatC family. As to quaternary structure, heterotrimer of A, B and C subunits.

It carries out the reaction L-glutamyl-tRNA(Gln) + L-glutamine + ATP + H2O = L-glutaminyl-tRNA(Gln) + L-glutamate + ADP + phosphate + H(+). The catalysed reaction is L-aspartyl-tRNA(Asn) + L-glutamine + ATP + H2O = L-asparaginyl-tRNA(Asn) + L-glutamate + ADP + phosphate + 2 H(+). In terms of biological role, allows the formation of correctly charged Asn-tRNA(Asn) or Gln-tRNA(Gln) through the transamidation of misacylated Asp-tRNA(Asn) or Glu-tRNA(Gln) in organisms which lack either or both of asparaginyl-tRNA or glutaminyl-tRNA synthetases. The reaction takes place in the presence of glutamine and ATP through an activated phospho-Asp-tRNA(Asn) or phospho-Glu-tRNA(Gln). The chain is Aspartyl/glutamyl-tRNA(Asn/Gln) amidotransferase subunit C from Herminiimonas arsenicoxydans.